A 421-amino-acid polypeptide reads, in one-letter code: ATP-dependent RNA helicase RhlB (421 aa).

The Q motif signature appears at 9-37 (QKFSDFALHPKVVEALEKKGFHNCTPIQA). Positions 40-219 (LPLTLAGRDV…FEQMNNAEYI (180 aa)) constitute a Helicase ATP-binding domain. 53-60 (AQTGTGKT) contributes to the ATP binding site. Positions 165-168 (DEAD) match the DEAD box motif. The 146-residue stretch at 245–390 (RLLQTLIEEE…VSKYNPDALM (146 aa)) folds into the Helicase C-terminal domain. The segment at 392–421 (DLPKPLRLTRPRTGNGPRRTGAPRNRRRSG) is disordered. The span at 402 to 414 (PRTGNGPRRTGAP) shows a compositional bias: low complexity.

Belongs to the DEAD box helicase family. RhlB subfamily. As to quaternary structure, component of the RNA degradosome, which is a multiprotein complex involved in RNA processing and mRNA degradation.

It is found in the cytoplasm. The catalysed reaction is ATP + H2O = ADP + phosphate + H(+). DEAD-box RNA helicase involved in RNA degradation. Has RNA-dependent ATPase activity and unwinds double-stranded RNA. This chain is ATP-dependent RNA helicase RhlB, found in Escherichia coli O157:H7.